Reading from the N-terminus, the 275-residue chain is Methylesterase 10 (275 aa).

The Acyl-ester intermediate role is filled by Ser-96. Active-site charge relay system residues include Asp-225 and His-253.

This sequence belongs to the AB hydrolase superfamily. Methylesterase family.

It carries out the reaction methyl (-)-jasmonate + H2O = jasmonate + methanol + H(+). It functions in the pathway plant hormone biosynthesis. The protein operates within lipid metabolism; oxylipin biosynthesis. Its function is as follows. Methylesterase shown to have methyl jasmonate (MeJA) esterase activity in vitro. In Arabidopsis thaliana (Mouse-ear cress), this protein is Methylesterase 10.